The primary structure comprises 313 residues: Dihydroorotate dehydrogenase (fumarate) (313 aa).

Residues alanine 20 and 44–45 (KS) each bind FMN. Substrate-binding positions include lysine 44, 68 to 72 (NSMGL), and asparagine 128. FMN is bound at residue asparagine 128. Cysteine 131 serves as the catalytic Nucleophile. A substrate-binding site is contributed by asparagine 133. FMN is bound by residues lysine 165 and valine 194. 195-196 (NS) is a substrate binding site. Residues glycine 223, cysteine 249, 249-251 (CGG), and 272-273 (GT) contribute to the FMN site.

This sequence belongs to the dihydroorotate dehydrogenase family. Type 1 subfamily. In terms of assembly, homodimer. Requires FMN as cofactor.

The protein localises to the cytoplasm. The enzyme catalyses (S)-dihydroorotate + fumarate = orotate + succinate. It participates in pyrimidine metabolism; UMP biosynthesis via de novo pathway. In terms of biological role, catalyzes the conversion of dihydroorotate to orotate with fumarate as the electron acceptor. Molecular oxygen can replace fumarate in vitro. The polypeptide is Dihydroorotate dehydrogenase (fumarate) (Trypanosoma brucei brucei (strain 927/4 GUTat10.1)).